We begin with the raw amino-acid sequence, 138 residues long: MRDMIWTYRALNNPAARRKWTAFILLIVLAGFGYTAYKIAGGAEVGKSLIAAAIFALFISLYAIITLGKPRHYYIEGDYVYYRPFKTNLKDIEGFEVDEERRVIRLKGAGIFSVRTLYFDNEDDLRQAVRRLERIVKR.

2 helical membrane-spanning segments follow: residues Thr-21 to Ala-43 and Ser-48 to Ile-65.

The protein resides in the cell membrane. This is an uncharacterized protein from Archaeoglobus fulgidus (strain ATCC 49558 / DSM 4304 / JCM 9628 / NBRC 100126 / VC-16).